A 97-amino-acid polypeptide reads, in one-letter code: Co-chaperonin GroES (97 aa).

It belongs to the GroES chaperonin family. As to quaternary structure, heptamer of 7 subunits arranged in a ring. Interacts with the chaperonin GroEL.

The protein localises to the cytoplasm. Its function is as follows. Together with the chaperonin GroEL, plays an essential role in assisting protein folding. The GroEL-GroES system forms a nano-cage that allows encapsulation of the non-native substrate proteins and provides a physical environment optimized to promote and accelerate protein folding. GroES binds to the apical surface of the GroEL ring, thereby capping the opening of the GroEL channel. This chain is Co-chaperonin GroES, found in Serratia proteamaculans (strain 568).